The sequence spans 193 residues: 3-isopropylmalate dehydratase small subunit (193 aa).

It belongs to the LeuD family. LeuD type 1 subfamily. Heterodimer of LeuC and LeuD.

It catalyses the reaction (2R,3S)-3-isopropylmalate = (2S)-2-isopropylmalate. Its pathway is amino-acid biosynthesis; L-leucine biosynthesis; L-leucine from 3-methyl-2-oxobutanoate: step 2/4. Catalyzes the isomerization between 2-isopropylmalate and 3-isopropylmalate, via the formation of 2-isopropylmaleate. The polypeptide is 3-isopropylmalate dehydratase small subunit (Bacillus anthracis (strain CDC 684 / NRRL 3495)).